Consider the following 204-residue polypeptide: uncharacterized protein (204 aa).

A disordered region spans residues 118–169; that stretch reads FPAASERPMPSRRLSKATQNVQTRPSERPAPCHRRPGPRGPGGRDPPEACHP.

This is an uncharacterized protein from Encephalitozoon cuniculi (strain GB-M1) (Microsporidian parasite).